The chain runs to 218 residues: Embryonic polyadenylate-binding protein 2-B (218 aa).

Disordered stretches follow at residues 1–24 and 169–218; these read MSER…ELDD and RTNM…NNPY. The RRM domain occupies 93–170; that stretch reads RSVYVGNVDY…RTIKVLPKRT (78 aa). Residues 198-209 show a composition bias toward basic residues; it reads QRPRGRPFRGRG.

As to quaternary structure, homodimer; Upon poly(A) binding, undergoes a dimer-monomer transition that removes the polyproline motif from the RNA recognition site and allows it to be replaced by the adenosine nucleotides of poly(A).

The protein localises to the cytoplasm. Functionally, binds the poly(A) tail of mRNA. Unable to interact with the cap-binding complex and is therefore unlikely to be involved in translation initiation. The chain is Embryonic polyadenylate-binding protein 2-B (Pabpn1l-b) from Xenopus laevis (African clawed frog).